The primary structure comprises 493 residues: Transcript termination protein A18 (493 aa).

Residues 100–256 (MIELKRPLYI…NSIINIAKLS (157 aa)) enclose the Helicase ATP-binding domain. 113–120 (LACGFGKT) is an ATP binding site. A DESH box motif is present at residues 206-209 (DESH).

Belongs to the helicase family. Poxviruses subfamily. Interacts with G2. Might be part of a transcription complex composed at least of G2, A18, and H5.

The protein resides in the virion. DNA helicase which seems to act as a postreplicative transcription termination factor. Involved in ATP-dependent release of nascent RNA. Forms a stable complex with single-stranded DNA, and to a lesser extent RNA. The chain is Transcript termination protein A18 from Cowpox virus (strain GRI-90 / Grishak) (CPV).